The chain runs to 256 residues: tRNA (guanine-N(1)-)-methyltransferase (256 aa).

S-adenosyl-L-methionine contacts are provided by residues G119 and 139-144; that span reads IGDYVV.

The protein belongs to the RNA methyltransferase TrmD family. In terms of assembly, homodimer.

Its subcellular location is the cytoplasm. The enzyme catalyses guanosine(37) in tRNA + S-adenosyl-L-methionine = N(1)-methylguanosine(37) in tRNA + S-adenosyl-L-homocysteine + H(+). In terms of biological role, specifically methylates guanosine-37 in various tRNAs. The polypeptide is tRNA (guanine-N(1)-)-methyltransferase (Nitrosospira multiformis (strain ATCC 25196 / NCIMB 11849 / C 71)).